Reading from the N-terminus, the 333-residue chain is Adenosine deaminase (333 aa).

Zn(2+) is bound by residues H12 and H14. The substrate site is built by H14, D16, and G170. Residue H197 coordinates Zn(2+). E200 acts as the Proton donor in catalysis. Position 278 (D278) interacts with Zn(2+). D279 provides a ligand contact to substrate.

Belongs to the metallo-dependent hydrolases superfamily. Adenosine and AMP deaminases family. Adenosine deaminase subfamily. Zn(2+) is required as a cofactor.

The catalysed reaction is adenosine + H2O + H(+) = inosine + NH4(+). The enzyme catalyses 2'-deoxyadenosine + H2O + H(+) = 2'-deoxyinosine + NH4(+). Functionally, catalyzes the hydrolytic deamination of adenosine and 2-deoxyadenosine. This Salmonella agona (strain SL483) protein is Adenosine deaminase.